The primary structure comprises 387 residues: Growth-regulating factor 3 (387 aa).

One can recognise a QLQ domain in the interval P53–R88. 2 short sequence motifs (bipartite nuclear localization signal) span residues K111–R129 and R147–K154. In terms of domain architecture, WRC spans D114–A158. The segment at M145–V176 is disordered.

It belongs to the GRF family.

Its subcellular location is the nucleus. Its function is as follows. Transcription activator that plays a regulatory role in gibberellin-induced stem elongation. The sequence is that of Growth-regulating factor 3 (GRF3) from Oryza sativa subsp. japonica (Rice).